Reading from the N-terminus, the 217-residue chain is Translation initiation factor 6 (217 aa).

The protein belongs to the eIF-6 family.

Its function is as follows. Binds to the 50S ribosomal subunit and prevents its association with the 30S ribosomal subunit to form the 70S initiation complex. This Picrophilus torridus (strain ATCC 700027 / DSM 9790 / JCM 10055 / NBRC 100828 / KAW 2/3) protein is Translation initiation factor 6.